The primary structure comprises 102 residues: Thioredoxin (102 aa).

The 101-residue stretch at 2-102 (VTEIKSLKQL…KAKIVQLVSQ (101 aa)) folds into the Thioredoxin domain. A disulfide bridge links Cys30 with Cys33.

It belongs to the thioredoxin family.

Functionally, participates in various redox reactions through the reversible oxidation of its active center dithiol to a disulfide and catalyzes dithiol-disulfide exchange reactions. This is Thioredoxin (trxA) from Mycoplasma pneumoniae (strain ATCC 29342 / M129 / Subtype 1) (Mycoplasmoides pneumoniae).